The chain runs to 938 residues: Protein translocase subunit SecA 1 (938 aa).

ATP-binding positions include Q84, 102 to 106, and D491; that span reads GEGKT. Positions 865-938 are disordered; sequence QTGGVATKER…QKTGRHAKRR (74 aa). The segment covering 918 to 927 has biased composition (basic and acidic residues); that stretch reads TRKERREAAR.

Belongs to the SecA family. In terms of assembly, monomer and homodimer. Part of the essential Sec protein translocation apparatus which comprises SecA, SecYEG and auxiliary proteins SecDF. Other proteins may also be involved.

It localises to the cell membrane. The protein resides in the cytoplasm. It catalyses the reaction ATP + H2O + cellular proteinSide 1 = ADP + phosphate + cellular proteinSide 2.. In terms of biological role, part of the Sec protein translocase complex. Interacts with the SecYEG preprotein conducting channel. Has a central role in coupling the hydrolysis of ATP to the transfer of proteins into and across the cell membrane, serving as an ATP-driven molecular motor driving the stepwise translocation of polypeptide chains across the membrane. The chain is Protein translocase subunit SecA 1 from Mycolicibacterium vanbaalenii (strain DSM 7251 / JCM 13017 / BCRC 16820 / KCTC 9966 / NRRL B-24157 / PYR-1) (Mycobacterium vanbaalenii).